We begin with the raw amino-acid sequence, 198 residues long: MMADTLILASLSSYRAQLLKKAGLNFLIEGASFDEREIGKIEKVKTPKELSCFLASAKAKNVSDRFPDALVIGCDQVLDLEGQIFHKVTSKKEAYQRLCTLSGKTHSLHSAVALFRNGRKIWVEAFSAHMSVRPLSSKFIKRYLAYVGTDVLNSVGVYQIEGEGIHLFEKIDGDFFTIIGLPLLPLLVKLRHLGIICD.

Asp-75 serves as the catalytic Proton acceptor.

This sequence belongs to the Maf family. YceF subfamily. A divalent metal cation is required as a cofactor.

The protein resides in the cytoplasm. It catalyses the reaction N(7)-methyl-GTP + H2O = N(7)-methyl-GMP + diphosphate + H(+). Functionally, nucleoside triphosphate pyrophosphatase that hydrolyzes 7-methyl-GTP (m(7)GTP). May have a dual role in cell division arrest and in preventing the incorporation of modified nucleotides into cellular nucleic acids. In Bartonella quintana (strain Toulouse) (Rochalimaea quintana), this protein is 7-methyl-GTP pyrophosphatase.